Consider the following 557-residue polypeptide: Urocanate hydratase (557 aa).

NAD(+)-binding positions include 53–54 (GG), Gln-131, 177–179 (GMG), 197–202 (ECQQSR), 243–244 (NA), 264–268 (QTSAH), 274–275 (YL), and 323–324 (YG). Cys-411 is an active-site residue. NAD(+) is bound by residues 455 to 456 (RE) and Gly-493.

As to quaternary structure, homodimer. Requires NAD(+) as cofactor.

The protein localises to the cytoplasm. The catalysed reaction is 4-imidazolone-5-propanoate = trans-urocanate + H2O. Its pathway is amino-acid degradation; L-histidine degradation into L-glutamate; N-formimidoyl-L-glutamate from L-histidine: step 2/3. Catalyzes the conversion of urocanate to 4-imidazolone-5-propionate. In Pseudomonas putida (Arthrobacter siderocapsulatus), this protein is Urocanate hydratase.